A 958-amino-acid polypeptide reads, in one-letter code: Voltage-gated inwardly rectifying potassium channel KCNH6 (958 aa).

Residues 1-261 (MPVRRGHVAP…YSPFKAVWDW (261 aa)) are Cytoplasmic-facing. The PAS domain occupies 41 to 70 (IIYCNDGFCELFGYSRVEVMQQPCTCDFLT). In terms of domain architecture, PAC spans 92–144 (CKVDILYYRKDASSFRCLVDVVPVKNEDGAVIMFILNFEDLAQLLAKCSSRSL). Residues 262–282 (LILLLVIYTAVFTPYSAAFLL) traverse the membrane as a helical segment. Residues 283-298 (SDQDESRRGACSYTCS) are Extracellular-facing. The helical transmembrane segment at 299–319 (PLTVVDLIVDIMFVVDIVINF) threads the bilayer. At 320–340 (RTTYVNTNDEVVSHPRRIAVH) the chain is on the cytoplasmic side. The chain crosses the membrane as a helical span at residues 341–361 (YFKGWFLIDMVAAIPFDLLIF). Over 362–370 (RTGSDETTT) the chain is Extracellular. The chain crosses the membrane as a helical; Voltage-sensor span at residues 371–391 (LIGLLKTARLLRLVRVARKLD). Over 392-398 (RYSEYGA) the chain is Cytoplasmic. The chain crosses the membrane as a helical span at residues 399–419 (AVLFLLMCTFALIAHWLACIW). Over 420 to 463 (YAIGNVERPYLEHKIGWLDSLGVQLGKRYNGSDPASGPSVQDKY) the chain is Extracellular. N449 is a glycosylation site (N-linked (GlcNAc...) (complex) asparagine). Positions 464 to 484 (VTALYFTFSSLTSVGFGNVSP) form an intramembrane region, pore-forming. The short motif at 476-481 (SVGFGN) is the Selectivity filter element. Over 485 to 490 (NTNSEK) the chain is Extracellular. Residues 491–511 (VFSICVMLIGSLMYASIFGNV) traverse the membrane as a helical segment. Over 512–958 (SAIIQRLYSG…DPGFAGSWGH (447 aa)) the chain is Cytoplasmic. The tract at residues 594–694 (AFSGAGKGCL…IQRADLLEVL (101 aa)) is cNMP-binding domain. Disordered regions lie at residues 720 to 751 (GLHS…PPLS) and 845 to 910 (TTSP…PPLA). A compositionally biased stretch (polar residues) spans 724–745 (SPRQAPGSQDHQGFFLSDNQSD).

It belongs to the potassium channel family. H (Eag) (TC 1.A.1.20) subfamily. Kv11.2/KCNH6 sub-subfamily. The potassium channel is probably composed of a homo- or heterotetrameric complex of pore-forming alpha subunits that can associate only within their subfamily. As to expression, expressed in prolactin-secreting adenomas.

Its subcellular location is the cell membrane. It catalyses the reaction K(+)(in) = K(+)(out). Its function is as follows. Pore-forming (alpha) subunit of voltage-gated inwardly rectifying potassium channel. Characterized by unusual gating kinetics by producing relatively small outward currents during membrane depolarization and large inward currents during subsequent repolarization which reflect a rapid inactivation during depolarization and quick recovery from inactivation but slow deactivation (closing) during repolarization. Activates even more slowly than KCNH2. The chain is Voltage-gated inwardly rectifying potassium channel KCNH6 from Homo sapiens (Human).